The following is a 448-amino-acid chain: Phosphoglucosamine mutase (448 aa).

Serine 108 (phosphoserine intermediate) is an active-site residue. Residues serine 108, aspartate 247, aspartate 249, and aspartate 251 each coordinate Mg(2+). Serine 108 carries the post-translational modification Phosphoserine.

Belongs to the phosphohexose mutase family. Requires Mg(2+) as cofactor. Post-translationally, activated by phosphorylation.

It carries out the reaction alpha-D-glucosamine 1-phosphate = D-glucosamine 6-phosphate. Functionally, catalyzes the conversion of glucosamine-6-phosphate to glucosamine-1-phosphate. This chain is Phosphoglucosamine mutase, found in Herminiimonas arsenicoxydans.